A 75-amino-acid polypeptide reads, in one-letter code: Large ribosomal subunit protein bL31c (75 aa).

Belongs to the bacterial ribosomal protein bL31 family. Type A subfamily. Part of the 50S ribosomal subunit.

The protein localises to the plastid. The protein resides in the chloroplast. Functionally, binds the 23S rRNA. This is Large ribosomal subunit protein bL31c from Cyanidium caldarium (Red alga).